Reading from the N-terminus, the 483-residue chain is Altronate oxidoreductase (483 aa).

Position 18–29 (18–29 (IIQFGEGNFLRA)) interacts with NAD(+).

It belongs to the mannitol dehydrogenase family. UxaB subfamily.

The enzyme catalyses D-altronate + NAD(+) = keto-D-tagaturonate + NADH + H(+). It functions in the pathway carbohydrate metabolism; pentose and glucuronate interconversion. The polypeptide is Altronate oxidoreductase (Klebsiella pneumoniae (strain 342)).